The sequence spans 264 residues: 3-methyl-2-oxobutanoate hydroxymethyltransferase (264 aa).

Residues Asp-46 and Asp-85 each coordinate Mg(2+). 3-methyl-2-oxobutanoate contacts are provided by residues 46–47 (DS), Asp-85, and Lys-113. Position 115 (Glu-115) interacts with Mg(2+). Glu-181 acts as the Proton acceptor in catalysis.

The protein belongs to the PanB family. In terms of assembly, homodecamer; pentamer of dimers. Mg(2+) is required as a cofactor.

Its subcellular location is the cytoplasm. It carries out the reaction 3-methyl-2-oxobutanoate + (6R)-5,10-methylene-5,6,7,8-tetrahydrofolate + H2O = 2-dehydropantoate + (6S)-5,6,7,8-tetrahydrofolate. The protein operates within cofactor biosynthesis; (R)-pantothenate biosynthesis; (R)-pantoate from 3-methyl-2-oxobutanoate: step 1/2. Functionally, catalyzes the reversible reaction in which hydroxymethyl group from 5,10-methylenetetrahydrofolate is transferred onto alpha-ketoisovalerate to form ketopantoate. This Salmonella typhi protein is 3-methyl-2-oxobutanoate hydroxymethyltransferase.